Here is a 334-residue protein sequence, read N- to C-terminus: N-acetyl-gamma-glutamyl-phosphate reductase (334 aa).

Residue Cys149 is part of the active site.

Belongs to the NAGSA dehydrogenase family. Type 1 subfamily.

The protein resides in the cytoplasm. The enzyme catalyses N-acetyl-L-glutamate 5-semialdehyde + phosphate + NADP(+) = N-acetyl-L-glutamyl 5-phosphate + NADPH + H(+). Its pathway is amino-acid biosynthesis; L-arginine biosynthesis; N(2)-acetyl-L-ornithine from L-glutamate: step 3/4. Catalyzes the NADPH-dependent reduction of N-acetyl-5-glutamyl phosphate to yield N-acetyl-L-glutamate 5-semialdehyde. In Sulfurimonas denitrificans (strain ATCC 33889 / DSM 1251) (Thiomicrospira denitrificans (strain ATCC 33889 / DSM 1251)), this protein is N-acetyl-gamma-glutamyl-phosphate reductase.